A 287-amino-acid chain; its full sequence is Putative sugar uptake protein LJ_0170 (287 aa).

Helical transmembrane passes span 4-23 (VYLF…IASV), 28-50 (VYNQ…MAIM), 56-78 (WSLF…GQYI), 91-108 (ISTG…VLAF), 118-137 (LYGF…TSFT), 150-169 (VSTI…SSSI), 179-198 (SIFF…YTLV), 211-230 (VQSG…YILS), 240-259 (FVIS…IFLH), and 266-285 (GLIF…MLTT).

It belongs to the GRP transporter (TC 2.A.7.5) family.

The protein resides in the cell membrane. This is Putative sugar uptake protein LJ_0170 from Lactobacillus johnsonii (strain CNCM I-12250 / La1 / NCC 533).